The sequence spans 88 residues: Small ribosomal subunit protein bS18 (88 aa).

The segment at 1 to 22 (MSTKNAKPKKEAQRRPSRKAKV) is disordered.

Belongs to the bacterial ribosomal protein bS18 family. As to quaternary structure, part of the 30S ribosomal subunit. Forms a tight heterodimer with protein bS6.

Functionally, binds as a heterodimer with protein bS6 to the central domain of the 16S rRNA, where it helps stabilize the platform of the 30S subunit. This Thermus thermophilus (strain ATCC BAA-163 / DSM 7039 / HB27) protein is Small ribosomal subunit protein bS18 (rpsR).